Consider the following 188-residue polypeptide: MATYSSNDFRAGLKIMMDGEPYAVESSEFVKPGKGQAFARVKLRRLLTGSRVEKTFKSTDSAEGADVVDMNLTYLYNDGEFWHFMNNETFEQLAADAKAVGDNAKWLLDQAECIVTLWNGQPISVTPPNFVELEIVDTDPGLKGDTAGTGGKPATLSTGAVVKVPLFVQIGEVIKVDTRSGEYVSRVK.

N6-(3,6-diaminohexanoyl)-5-hydroxylysine is present on Lys-34.

This sequence belongs to the elongation factor P family. In terms of processing, may be beta-lysylated on the epsilon-amino group of Lys-34 by the combined action of EpmA and EpmB, and then hydroxylated on the C5 position of the same residue by EpmC (if this protein is present). Lysylation is critical for the stimulatory effect of EF-P on peptide-bond formation. The lysylation moiety may extend toward the peptidyltransferase center and stabilize the terminal 3-CCA end of the tRNA. Hydroxylation of the C5 position on Lys-34 may allow additional potential stabilizing hydrogen-bond interactions with the P-tRNA.

It is found in the cytoplasm. The protein operates within protein biosynthesis; polypeptide chain elongation. Involved in peptide bond synthesis. Alleviates ribosome stalling that occurs when 3 or more consecutive Pro residues or the sequence PPG is present in a protein, possibly by augmenting the peptidyl transferase activity of the ribosome. Modification of Lys-34 is required for alleviation. The sequence is that of Elongation factor P from Cronobacter sakazakii (strain ATCC BAA-894) (Enterobacter sakazakii).